Here is a 406-residue protein sequence, read N- to C-terminus: Arginine biosynthesis bifunctional protein ArgJ (406 aa).

Substrate contacts are provided by T152, K179, T190, E277, N401, and S406. Residue T190 is the Nucleophile of the active site.

This sequence belongs to the ArgJ family. As to quaternary structure, heterotetramer of two alpha and two beta chains.

The protein localises to the cytoplasm. The catalysed reaction is N(2)-acetyl-L-ornithine + L-glutamate = N-acetyl-L-glutamate + L-ornithine. It catalyses the reaction L-glutamate + acetyl-CoA = N-acetyl-L-glutamate + CoA + H(+). The protein operates within amino-acid biosynthesis; L-arginine biosynthesis; L-ornithine and N-acetyl-L-glutamate from L-glutamate and N(2)-acetyl-L-ornithine (cyclic): step 1/1. It participates in amino-acid biosynthesis; L-arginine biosynthesis; N(2)-acetyl-L-ornithine from L-glutamate: step 1/4. Catalyzes two activities which are involved in the cyclic version of arginine biosynthesis: the synthesis of N-acetylglutamate from glutamate and acetyl-CoA as the acetyl donor, and of ornithine by transacetylation between N(2)-acetylornithine and glutamate. In Neisseria gonorrhoeae (strain ATCC 700825 / FA 1090), this protein is Arginine biosynthesis bifunctional protein ArgJ.